Here is a 460-residue protein sequence, read N- to C-terminus: MPINAITSDHVIINGANKPATIVYSTESGTILDVLEGSVVMEKTEITKYEIHTLENVSPCTILPGLVDSHVHLNEPGRTSWEGFETGTQAAISGGVTTVVDMPLNAIPPTTNVENFRIKLEAAEGQMWCDVGFWGGLVPHNLPDLIPLVKAGVRGFKGFLLDSGVEEFPPIGKEYIEEALKVLAEEDTMMMFHAELPKAHEDQQQPEQSHREYSSFLSSRPDSFEIDAINLILECLRARNGPVPPVHIVHLASMKAIPLIRKARASGLPVTTETCFHYLCIAAEQIPDGATYFKCCPPIRSESNRQGLWDALREGVIGSVVSDHSPCTPELKNLQKGDFFDSWGGIASVGLGLPLMFTQGCSLVDIVTWCCKNTSHQVGLSHQKGTIAPGYDADLVVFDTASKHKISNSSVYFKNKLTAYNGMTVKGTVLKTILRGQVVYTNANGVSKTPLGQTLLDSRR.

Residues histidine 70, histidine 72, lysine 157, histidine 193, histidine 250, and aspartate 323 each contribute to the Zn(2+) site. Residue lysine 157 is modified to N6-carboxylysine.

This sequence belongs to the metallo-dependent hydrolases superfamily. Allantoinase family. In terms of assembly, homotetramer. Zn(2+) is required as a cofactor. Post-translationally, carboxylation allows a single lysine to coordinate two zinc ions.

The enzyme catalyses (S)-allantoin + H2O = allantoate + H(+). It functions in the pathway nitrogen metabolism; (S)-allantoin degradation; allantoate from (S)-allantoin: step 1/1. Its function is as follows. Catalyzes the conversion of allantoin (5-ureidohydantoin) to allantoic acid by hydrolytic cleavage of the five-member hydantoin ring. Involved in the utilization of purines as secondary nitrogen sources, when primary sources are limiting. In Saccharomyces cerevisiae (strain ATCC 204508 / S288c) (Baker's yeast), this protein is Allantoinase (DAL1).